The sequence spans 433 residues: GTPase Der (433 aa).

2 EngA-type G domains span residues 3 to 167 (NRVV…KEEK) and 175 to 347 (IKVA…KDYT). Residues 9-16 (GRPNVGKS), 56-60 (DTGGL), 119-122 (NKID), 181-188 (GRPNVGKS), 228-232 (DTAGV), and 293-296 (NKMD) each bind GTP. Positions 348–432 (KQHKTSFVNR…PIKLVIKGRE (85 aa)) constitute a KH-like domain.

This sequence belongs to the TRAFAC class TrmE-Era-EngA-EngB-Septin-like GTPase superfamily. EngA (Der) GTPase family. Associates with the 50S ribosomal subunit.

Its function is as follows. GTPase that plays an essential role in the late steps of ribosome biogenesis. This is GTPase Der from Aquifex aeolicus (strain VF5).